The following is a 232-amino-acid chain: MSMPQAILTDIEGTTSSLSFVKEVLFPYARRALPDFVREHREHPDVMPWLDQVANETGTAFSEEALVATLQTWIDTDSKHTALKALQGMIWTSGYQNGDFTAHLYPDAVQRLRAWHAANVPLYVYSSGSVPAQQLFFRHSHAGDLSGLFSGWFDTQIGGKRESTSYQRIAQHIGIAPAGIVFLSDVIEELNAAAQIGLNTVLIDRRDDYPTPRHLKDTDRHLHLDSFAQLPF.

This sequence belongs to the HAD-like hydrolase superfamily. MasA/MtnC family. Monomer. Requires Mg(2+) as cofactor.

The catalysed reaction is 5-methylsulfanyl-2,3-dioxopentyl phosphate + H2O = 1,2-dihydroxy-5-(methylsulfanyl)pent-1-en-3-one + phosphate. It functions in the pathway amino-acid biosynthesis; L-methionine biosynthesis via salvage pathway; L-methionine from S-methyl-5-thio-alpha-D-ribose 1-phosphate: step 3/6. The protein operates within amino-acid biosynthesis; L-methionine biosynthesis via salvage pathway; L-methionine from S-methyl-5-thio-alpha-D-ribose 1-phosphate: step 4/6. Bifunctional enzyme that catalyzes the enolization of 2,3-diketo-5-methylthiopentyl-1-phosphate (DK-MTP-1-P) into the intermediate 2-hydroxy-3-keto-5-methylthiopentenyl-1-phosphate (HK-MTPenyl-1-P), which is then dephosphorylated to form the acireductone 1,2-dihydroxy-3-keto-5-methylthiopentene (DHK-MTPene). The chain is Enolase-phosphatase E1 from Xylella fastidiosa (strain Temecula1 / ATCC 700964).